The sequence spans 341 residues: MATWRRDGRLTGSQRLLCAGLAGAFSLSLTAPLELATVLAQVGKVQSHSLGLWATGRRVWLSEGPRALWKGNGVACLRLFPCSMVQLAAYRKFVVLFMDDLGRISQWSSIVTGSLAGMVSTIVTYPTDLIKTRLMVQNVLEPSYRGLIHAFSTIYQQEGFLALYRGVSLTVLGAVPFSAGSLLVYMNLEKVWNGPRDRFSHLQNFANVCVAAAVSQTLSFPFDTVKRKMQAQSPYLPHYGGVDVHFSGAADCFRQIVKTQGVLGLWNGLTANLLKVVPYFGVMFSMFEFCKRIFLYQNGYTLSPLTYKLTPGVDQSLKPQELRELKKFFKRRKLHSKTPPW.

Solcar repeat units lie at residues 11–101 (TGSQ…MDDL), 105–185 (SQWS…LLVY), and 200–298 (SHLQ…LYQN). 6 helical membrane passes run 16–36 (LLCA…LELA), 68–88 (LWKG…VQLA), 110–130 (IVTG…TDLI), 166–186 (GVSL…LVYM), 205–225 (FANV…FDTV), and 262–282 (VLGL…YFGV).

Belongs to the mitochondrial carrier (TC 2.A.29) family.

The protein localises to the mitochondrion inner membrane. The protein is Solute carrier family 25 member 43 (Slc25a43) of Mus musculus (Mouse).